Consider the following 192-residue polypeptide: Ion-translocating oxidoreductase complex subunit B (192 aa).

The segment at 1–26 is hydrophobic; sequence MNAIWIAVAAVSLLGLAFGAILGYAS. The 60-residue stretch at 32 to 91 folds into the 4Fe-4S domain; the sequence is EDDPVVEKIDEILPQSQCGQCGYPGCRPYAETISCNGEKINRCAPGGEAVMLKIAELLNV. [4Fe-4S] cluster is bound by residues cysteine 49, cysteine 52, cysteine 57, cysteine 74, cysteine 117, cysteine 120, cysteine 123, cysteine 127, cysteine 147, cysteine 150, cysteine 153, and cysteine 157. 4Fe-4S ferredoxin-type domains are found at residues 108 to 137 and 138 to 167; these read MVAV…GATR and AMHT…LQPV.

The protein belongs to the 4Fe4S bacterial-type ferredoxin family. RnfB subfamily. In terms of assembly, the complex is composed of six subunits: RsxA, RsxB, RsxC, RsxD, RsxE and RsxG. Requires [4Fe-4S] cluster as cofactor.

The protein resides in the cell inner membrane. Its function is as follows. Part of a membrane-bound complex that couples electron transfer with translocation of ions across the membrane. Required to maintain the reduced state of SoxR. In Escherichia coli O6:K15:H31 (strain 536 / UPEC), this protein is Ion-translocating oxidoreductase complex subunit B.